The sequence spans 140 residues: PDZ domain-containing protein 11 (140 aa).

Residues 47 to 129 (TITLKKPPGA…ISMRVRFFPY (83 aa)) enclose the PDZ domain.

Interacts with ATP2B1, ATP2B2, ATP2B3, ATP2B4 and ATP7A. Interacts with PLEKHA7 (via WW domains) at zonula adherens; this interaction is essential for the interaction between PLEKHA7 and the ADAM10-binding protein TSPAN33. Interacts with SLC5A6. As to expression, widely expressed (at protein level).

It localises to the secreted. Its subcellular location is the cytoplasm. It is found in the cell junction. The protein resides in the adherens junction. The protein localises to the cell membrane. Its function is as follows. Mediates docking of ADAM10 to zonula adherens by interacting with PLEKHA7 which is required for PLEKHA7 to interact with the ADAM10-binding protein TSPAN33. The protein is PDZ domain-containing protein 11 (PDZD11) of Homo sapiens (Human).